A 270-amino-acid chain; its full sequence is Carboxy-terminal domain RNA polymerase II polypeptide A small phosphatase 2 (270 aa).

Serine 5 bears the Phosphoserine mark. The region spanning 96–254 (QDQGRICVVI…LNLIPVFEEL (159 aa)) is the FCP1 homology domain. The 4-aspartylphosphate intermediate role is filled by aspartate 106. Residues aspartate 106, aspartate 108, and asparagine 217 each contribute to the Mg(2+) site. Aspartate 108 functions as the Proton donor in the catalytic mechanism.

In terms of assembly, monomer. Interacts with REST. It depends on Mg(2+) as a cofactor. As to expression, expression is restricted to non-neuronal tissues.

The protein localises to the nucleus. It catalyses the reaction O-phospho-L-seryl-[protein] + H2O = L-seryl-[protein] + phosphate. It carries out the reaction O-phospho-L-threonyl-[protein] + H2O = L-threonyl-[protein] + phosphate. Preferentially catalyzes the dephosphorylation of 'Ser-5' within the tandem 7 residue repeats in the C-terminal domain (CTD) of the largest RNA polymerase II subunit POLR2A. Negatively regulates RNA polymerase II transcription, possibly by controlling the transition from initiation/capping to processive transcript elongation. Recruited by REST to neuronal genes that contain RE-1 elements, leading to neuronal gene silencing in non-neuronal cells. The polypeptide is Carboxy-terminal domain RNA polymerase II polypeptide A small phosphatase 2 (Ctdsp2) (Mus musculus (Mouse)).